The chain runs to 432 residues: Serine/threonine-protein phosphatase 2A activator 1 (432 aa).

It belongs to the PTPA-type PPIase family.

It is found in the cytoplasm. The protein resides in the nucleus. It carries out the reaction [protein]-peptidylproline (omega=180) = [protein]-peptidylproline (omega=0). Functionally, PPIases accelerate the folding of proteins. It catalyzes the cis-trans isomerization of proline imidic peptide bonds in oligopeptides. Acts as a regulatory subunit for PP2A-like phosphatases modulating their activity or substrate specificity, probably by inducing a conformational change in the catalytic subunit, a direct target of the PPIase. Can reactivate inactive phosphatase PP2A-phosphatase methylesterase complexes (PP2Ai) in presence of ATP and Mg(2+) by dissociating the inactive form from the complex. In Emericella nidulans (strain FGSC A4 / ATCC 38163 / CBS 112.46 / NRRL 194 / M139) (Aspergillus nidulans), this protein is Serine/threonine-protein phosphatase 2A activator 1 (rrd1).